A 341-amino-acid chain; its full sequence is MDLSSQEYDPSQFCFPAVNNSCLKGTHHVSTQTVVYLILASAMTVTVLGNSVVIISIAHFKQLQTPTNILVMSLALADLLLGLVVMPFSMIRSVDGCWYYGETFCLLHTGFDLFLTSVSIFHLIFIAVDRHQAVCFPLQYPTRITIPVAWVMVMISWSMAAFYSYGVVYSKANLEGLEEYIASVYCMGGCTLYFNALWSVLDTLLTFFLPCSVMVGLYARIFVVAKKHIKSITEANQNENENVFKNPRRSERKAAKTLGIVVGAFILCWLPFFINSLVDPYINFSTPYALFDAFGWLGYTNSTLNPIIYGLFYPWFRKTLSLIVTLRIFEPNSSDINLFTV.

The Extracellular segment spans residues 1–34 (MDLSSQEYDPSQFCFPAVNNSCLKGTHHVSTQTV). N-linked (GlcNAc...) asparagine glycosylation is present at asparagine 19. Cystine bridges form between cysteine 22-cysteine 186 and cysteine 105-cysteine 186. The chain crosses the membrane as a helical span at residues 35-55 (VYLILASAMTVTVLGNSVVII). At 56-68 (SIAHFKQLQTPTN) the chain is on the cytoplasmic side. The chain crosses the membrane as a helical span at residues 69–89 (ILVMSLALADLLLGLVVMPFS). Residues 90-105 (MIRSVDGCWYYGETFC) lie on the Extracellular side of the membrane. Residues 106 to 126 (LLHTGFDLFLTSVSIFHLIFI) traverse the membrane as a helical segment. Topologically, residues 127 to 147 (AVDRHQAVCFPLQYPTRITIP) are cytoplasmic. A helical transmembrane segment spans residues 148–168 (VAWVMVMISWSMAAFYSYGVV). Over 169–195 (YSKANLEGLEEYIASVYCMGGCTLYFN) the chain is Extracellular. Residues 196-219 (ALWSVLDTLLTFFLPCSVMVGLYA) form a helical membrane-spanning segment. Residues 220 to 257 (RIFVVAKKHIKSITEANQNENENVFKNPRRSERKAAKT) are Cytoplasmic-facing. Residues 258 to 278 (LGIVVGAFILCWLPFFINSLV) form a helical membrane-spanning segment. At 279-292 (DPYINFSTPYALFD) the chain is on the extracellular side. Asparagine 283 carries an N-linked (GlcNAc...) asparagine glycan. A helical membrane pass occupies residues 293 to 313 (AFGWLGYTNSTLNPIIYGLFY). Topologically, residues 314 to 341 (PWFRKTLSLIVTLRIFEPNSSDINLFTV) are cytoplasmic.

The protein belongs to the G-protein coupled receptor 1 family. In terms of tissue distribution, expressed in olfactory epithelium (at protein level). Detected in a sparse population of olfactory sensory neurons.

It is found in the cell membrane. Functionally, olfactory receptor for medium length odd-chained diamines including cadaverine which is generated by bacterial decarboxylation of the basic amino acid lysine and contributes to the odor of decomposing tissue. Mediates pronounced innate aversion behavior to cadaverine. The polypeptide is Trace amine-associated receptor 13c (Danio rerio (Zebrafish)).